We begin with the raw amino-acid sequence, 85 residues long: Large ribosomal subunit protein bL27 (85 aa).

The disordered stretch occupies residues 1 to 20 (MATKKAGGSTRNGRDSEAKR).

This sequence belongs to the bacterial ribosomal protein bL27 family.

The sequence is that of Large ribosomal subunit protein bL27 from Glaesserella parasuis serovar 5 (strain SH0165) (Haemophilus parasuis).